The sequence spans 235 residues: Protein FEV (235 aa).

The segment at residues 58 to 138 (IQLWQFLLEL…HGKRYAYKFD (81 aa)) is a DNA-binding region (ETS).

The protein belongs to the ETS family. As to expression, expressed by serotonergic neurons in anterior and posterior raphe.

It localises to the nucleus. Functions as a transcriptional regulator. Functions in the differentiation and the maintenance of the central serotonergic neurons. May play a role in cell growth. The polypeptide is Protein FEV (fev) (Danio rerio (Zebrafish)).